A 190-amino-acid polypeptide reads, in one-letter code: RNA-binding protein OPG065 (190 aa).

Residues 5–70 enclose the Z-binding domain; that stretch reads YIDERSNAEI…DIPPRWFMTT (66 aa). The DRBM domain maps to 117-184; it reads NPVTVINEYC…AKLAVDKLLG (68 aa).

This sequence belongs to the orthopoxvirus OPG065 family. In terms of assembly, interacts with host G1P2/ISG15. Interacts with host EIF2AK2/PKR. Interacts with host ZBP1.

Functionally, RNA-binding protein that plays a role in the inhibition of multiple cellular antiviral responses activated by double-stranded RNA (dsRNA), such as inhibition of PKR activation, necroptosis, and IFN-mediated antiviral activities. Recognizes and binds Z-RNA structures via its Z-binding domain and dsRNA via its DRBM domain: RNA-binding activity is required to escape host ZBP1-dependent necroptosis. Mechanistically, the Z-binding domain binds Z-RNAs that are produced during vaccinia virus infection, thereby competing with Z-RNA detection by host ZBP1, suppressing ZBP1-dependent necroptosis. Acts as a key inhibitor of the interferon response by blocking the phosphorylation and subsequent activation of IRF3 and IRF7 kinases that are required for interferon-alpha gene expression. Inhibits NF-kappa-B activation and the ubiquitin-like protein ISG15, which is an early antiviral protein. The binding with host ISG15 subsequently blocks host ISGylation. This Vaccinia virus (strain Western Reserve) (VACV) protein is RNA-binding protein OPG065 (OPG065).